The chain runs to 335 residues: Malate dehydrogenase 1 (335 aa).

Residues 11 to 16 (GAGNVG) and D35 each bind NAD(+). Residues R97 and R103 each coordinate substrate. NAD(+)-binding positions include N110 and 133 to 135 (VTN). Substrate contacts are provided by N135 and R166. The active-site Proton acceptor is H190.

This sequence belongs to the LDH/MDH superfamily. MDH type 3 family.

The enzyme catalyses (S)-malate + NAD(+) = oxaloacetate + NADH + H(+). Its function is as follows. Catalyzes the reversible oxidation of malate to oxaloacetate. The chain is Malate dehydrogenase 1 (mdh1) from Aquifex aeolicus (strain VF5).